The sequence spans 214 residues: 3-isopropylmalate dehydratase small subunit (214 aa).

This sequence belongs to the LeuD family. LeuD type 1 subfamily. In terms of assembly, heterodimer of LeuC and LeuD.

It carries out the reaction (2R,3S)-3-isopropylmalate = (2S)-2-isopropylmalate. Its pathway is amino-acid biosynthesis; L-leucine biosynthesis; L-leucine from 3-methyl-2-oxobutanoate: step 2/4. In terms of biological role, catalyzes the isomerization between 2-isopropylmalate and 3-isopropylmalate, via the formation of 2-isopropylmaleate. The chain is 3-isopropylmalate dehydratase small subunit from Alcanivorax borkumensis (strain ATCC 700651 / DSM 11573 / NCIMB 13689 / SK2).